The primary structure comprises 371 residues: Glutamate 5-kinase (371 aa).

Lysine 14 provides a ligand contact to ATP. The substrate site is built by serine 54, aspartate 141, and asparagine 153. 173 to 174 (TD) is a binding site for ATP. The PUA domain occupies 280–357 (AGSLIVDAGA…SDIEQLLGYI (78 aa)).

It belongs to the glutamate 5-kinase family.

The protein localises to the cytoplasm. The catalysed reaction is L-glutamate + ATP = L-glutamyl 5-phosphate + ADP. It functions in the pathway amino-acid biosynthesis; L-proline biosynthesis; L-glutamate 5-semialdehyde from L-glutamate: step 1/2. Catalyzes the transfer of a phosphate group to glutamate to form L-glutamate 5-phosphate. This Azoarcus sp. (strain BH72) protein is Glutamate 5-kinase.